Consider the following 75-residue polypeptide: Kappa-thalatoxin-Cad2a (75 aa).

Residues 1–22 (MKFQMIAAVLLIAFCLCVVVTA) form the signal peptide. The propeptide occupies 23–40 (RMELQDVEDMKNGSFQKR). The region spanning 43-75 (CIDTIPKSRCTAFQCKNSMKYRLSFCRKTCGTC) is the ShKT domain. 3 disulfide bridges follow: C43/C75, C52/C68, and C57/C72.

This sequence belongs to the sea anemone type 1 potassium channel toxin family. Type 1a subfamily.

It localises to the secreted. It is found in the nematocyst. In terms of biological role, inhibits voltage-gated potassium channels (Kv) with higher potency for Kv1.1/KCNA1 and Kv1.3/KCNA3. This is Kappa-thalatoxin-Cad2a from Cryptodendrum adhaesivum (Adhesive sea anemone).